We begin with the raw amino-acid sequence, 286 residues long: ATP synthase gamma chain (286 aa).

It belongs to the ATPase gamma chain family. F-type ATPases have 2 components, CF(1) - the catalytic core - and CF(0) - the membrane proton channel. CF(1) has five subunits: alpha(3), beta(3), gamma(1), delta(1), epsilon(1). CF(0) has three main subunits: a, b and c.

It localises to the cell inner membrane. Produces ATP from ADP in the presence of a proton gradient across the membrane. The gamma chain is believed to be important in regulating ATPase activity and the flow of protons through the CF(0) complex. The sequence is that of ATP synthase gamma chain from Pseudomonas fluorescens (strain SBW25).